The chain runs to 72 residues: Protein kish-A (72 aa).

The N-terminal stretch at 1-26 (MSAIFNFQSLLTVILLLICTCAYIRS) is a signal peptide. Residues 27–53 (LAPSLLDKNKSGLLGIFWKCARIGERK) are Extracellular-facing. N-linked (GlcNAc...) asparagine glycosylation occurs at asparagine 35. Residues 54–71 (SPYVAVCCVVMAFSILFM) traverse the membrane as a helical segment. Position 72 (glutamine 72) is a topological domain, cytoplasmic.

The protein belongs to the KISH family.

It localises to the golgi apparatus membrane. In terms of biological role, involved in the early part of the secretory pathway. The polypeptide is Protein kish-A (TMEM167A) (Taeniopygia guttata (Zebra finch)).